Reading from the N-terminus, the 184-residue chain is LPS-assembly lipoprotein LptE (184 aa).

A signal peptide spans 1–19 (MRHRLFTLVLGLAVLITAG). A lipid anchor (N-palmitoyl cysteine) is attached at cysteine 20. Cysteine 20 carries S-diacylglycerol cysteine lipidation.

This sequence belongs to the LptE lipoprotein family. Component of the lipopolysaccharide transport and assembly complex. Interacts with LptD.

The protein resides in the cell outer membrane. Its function is as follows. Together with LptD, is involved in the assembly of lipopolysaccharide (LPS) at the surface of the outer membrane. Required for the proper assembly of LptD. Binds LPS and may serve as the LPS recognition site at the outer membrane. The polypeptide is LPS-assembly lipoprotein LptE (Pectobacterium atrosepticum (strain SCRI 1043 / ATCC BAA-672) (Erwinia carotovora subsp. atroseptica)).